Consider the following 426-residue polypeptide: Potassium channel subfamily K member 2 (426 aa).

Topologically, residues 1–61 (MLASASRERP…SAINVMKWKT (61 aa)) are cytoplasmic. 2 important for GNG4 binding and L-glutamate release in astrocytes regions span residues 17–38 (AAPD…LSFS) and 51–61 (DSAINVMKWKT). Residues 62–82 (VSTIFLVVVLYLIIGATVFKA) traverse the membrane as a helical segment. N-linked (GlcNAc...) asparagine glycans are attached at residues asparagine 110 and asparagine 134. An intramembrane region (pore-forming) is located at residues 144 to 170 (LGSSFFFAGTVITTIGFGNISPRTEGG). The K(+) site is built by threonine 157, isoleucine 158, glycine 159, and phenylalanine 160. Positions 157-162 (TIGFGN) are selectivity filter 1. A helical transmembrane segment spans residues 172–192 (IFCIIYALLGIPLFGFLLAGV). Residues 193–222 (GDQLGTIFGKGIAKVEDTFIKWNVSQTKIR) lie on the Cytoplasmic side of the membrane. A helical membrane pass occupies residues 223 to 243 (IISTIIFILFGCVLFVALPAV). Residues 253 to 283 (ALDAIYFVVITLTTIGFGDYVAGGSDIEYLD) constitute an intramembrane region (pore-forming). Positions 266, 267, 268, and 269 each coordinate K(+). Residues 266 to 271 (TIGFGD) are selectivity filter 2. A helical transmembrane segment spans residues 288–308 (VVWFWILVGLAYFAAVLSMIG). Residues 309–426 (DWLRVISKKT…EDIAVIENMK (118 aa)) lie on the Cytoplasmic side of the membrane. The tract at residues 313–326 (VISKKTKEEVGEFR) is interaction with AKAP5. An essential for chloroform and halothane sensitivity region spans residues 337–385 (TAEFKETRRRLSVEIYDKFQRATSVKRKLSAELAGNHNQELTPCRRTLS). Serine 348 carries the post-translational modification Phosphoserine; by PKA.

The protein belongs to the two pore domain potassium channel (TC 1.A.1.8) family. In terms of assembly, homodimer; disulfide-linked. Forms heterodimers with other 2-pore domain K(+) channel subunits, such as KCNK1, KCNK4, KCNK10 and KCNK18. Interacts with AKAP5; the channel is recruited to postsynaptic microdomains by AKAP5 where it can integrate neurotransmitter receptor signals. Part of a complex composed of AKAP5 and ADRB2. Upon AKAP5 binding, the channel is no longer sensitive to intracellular acidification, membrane stretch or arachidonic acid stimuli. Interacts with POPDC1; the interaction enhances KCNK2 surface expression and is inhibited by cAMP. Interacts (via N-terminus) with G-protein subunit GNG4 (via C-terminus); this interaction confers ion selectivity to L-glutamate and Cl(-) anions. In terms of processing, phosphorylation at Ser-348 controls the reversible conversion from a leak channel to a voltage-dependent channel. As to expression, expressed in cardiomyocytes (at protein level). Expressed in various brain regions including the lateral olfactory tract, piriform cortex of the forebrain, paraventricular and anteromedial thalamic nuclei, brainstem, caudate putamen, nucleus accumbens, neocortex and interpeduncular nucleus. Detected in astrocytes in hippocampus stratum radiatum. Expressed in brain and kidney.

It localises to the cell membrane. Its subcellular location is the endoplasmic reticulum membrane. It is found in the cell projection. The protein resides in the axon. The protein localises to the dendrite. It localises to the postsynaptic density membrane. Its subcellular location is the sarcolemma. The catalysed reaction is K(+)(in) = K(+)(out). The enzyme catalyses L-glutamate(out) = L-glutamate(in). It catalyses the reaction chloride(in) = chloride(out). It carries out the reaction Rb(+)(in) = Rb(+)(out). The catalysed reaction is Cs(+)(in) = Cs(+)(out). With respect to regulation, activated by various stimuli including intracellular acidic pH, mechanical stretch and polyunsaturated fatty acids such as arachidonic acid. Its function is as follows. K(+) channel that conducts voltage-dependent outward rectifying currents upon membrane depolarization. Voltage sensing is coupled to K(+) electrochemical gradient in an 'ion flux gating' mode where outward but not inward ion flow opens the gate. Converts to voltage-independent 'leak' conductance mode upon stimulation by various stimuli including mechanical membrane stretch, acidic pH, heat and lipids. Reversibly converts between a voltage-insensitive K(+) 'leak' channel and a voltage-dependent outward rectifying K(+) channel in a phosphorylation-dependent manner. Homo- and heterodimerizes to form functional channels with distinct regulatory and gating properties. In trigeminal ganglia sensory neurons, the heterodimer of KCNK2/TREK-1 and KCNK18/TRESK inhibits neuronal firing and neurogenic inflammation by stabilizing the resting membrane potential at K(+) equilibrium potential as well as by regulating the threshold of action potentials and the spike frequency. At trigeminal A-beta afferent nerves, the heterodimer of KCNK2/TREK-1 and KCNK4/TRAAK is mostly coexpressed at nodes of Ranvier where it conducts voltage-independent mechanosensitive and thermosensitive currents, allowing rapid action potential repolarization, high speed and high frequence saltatory conduction on myelinated nerves to ensure prompt sensory responses. In hippocampal astrocytes, the heterodimer of KCNK2/TREK-1 and KCNK1/TWIK-1 allows passive K(+) conductance under basal conditions, but changes ion selectivity and becomes permeable to L-glutamate and Cl(-) ions upon binding to G-protein subunit GNG4 in stimulated astrocytes. Mediates rapid L-glutamate release in response to activation of G-protein-coupled receptors such as F2R and CNR1. In hippocampal pyramidal neurons, the homodimer of KCNK2/TREK-1 contributes to gamma-aminobutyric acid (GABA) B-induced slow inhibitory postsynaptic potential. Associates with AKAP5 and Gs-protein-coupled receptor B2AR at postsynaptic dense bodies and converts to a leak channel no longer sensitive to stimulation by arachidonic acid, acidic pH or mechanical stress, nor inhibited by Gq-coupled receptors but still under the negative control of Gs-coupled receptors. Permeable to other monovalent cations such as Rb(+) and Cs(+). Does not display channel activity but reduces the channel activity of isoform 1, isoform 2 and isoform 4 and reduces cell surface expression of isoform 2. The polypeptide is Potassium channel subfamily K member 2 (Rattus norvegicus (Rat)).